Reading from the N-terminus, the 377-residue chain is tRNA-specific 2-thiouridylase MnmA (377 aa).

ATP contacts are provided by residues 12 to 19 (GMSGGVDS) and methionine 38. The interaction with target base in tRNA stretch occupies residues 98 to 100 (NPD). Cysteine 103 (nucleophile) is an active-site residue. Cysteines 103 and 200 form a disulfide. Residue glycine 127 coordinates ATP. Residues 150-152 (KDQ) form an interaction with tRNA region. The active-site Cysteine persulfide intermediate is cysteine 200. The segment at 314 to 315 (RY) is interaction with tRNA.

This sequence belongs to the MnmA/TRMU family.

It is found in the cytoplasm. It carries out the reaction S-sulfanyl-L-cysteinyl-[protein] + uridine(34) in tRNA + AH2 + ATP = 2-thiouridine(34) in tRNA + L-cysteinyl-[protein] + A + AMP + diphosphate + H(+). In terms of biological role, catalyzes the 2-thiolation of uridine at the wobble position (U34) of tRNA, leading to the formation of s(2)U34. The sequence is that of tRNA-specific 2-thiouridylase MnmA from Limosilactobacillus reuteri (strain DSM 20016) (Lactobacillus reuteri).